The primary structure comprises 142 residues: Large ribosomal subunit protein bL17 (142 aa).

This sequence belongs to the bacterial ribosomal protein bL17 family. Part of the 50S ribosomal subunit. Contacts protein L32.

This is Large ribosomal subunit protein bL17 from Brucella abortus (strain S19).